The following is a 347-amino-acid chain: Pre-B-cell leukemia transcription factor 1 (347 aa).

The tract at residues 1 to 40 is disordered; that stretch reads MDDQPRLMHSHPGVGMAGHPSLSQHMQDGTGANEGEGGRK. Positions 38–232 constitute a PBC domain; that stretch reads GRKQDIGDIL…VMILRSRFLD (195 aa). A PBC-A region spans residues 45–124; sequence DILQQIMTIT…EGVAGPEKGG (80 aa). A PBC-B region spans residues 127 to 232; the sequence is AAAAAAAAAS…VMILRSRFLD (106 aa). The segment at residues 233 to 295 is a DNA-binding region (homeobox; TALE-type); sequence ARRKRRNFNK…NKRIRYKKNI (63 aa). Over residues 318–331 the composition is skewed to polar residues; the sequence is VHGSQANSPSTPSS. The tract at residues 318-347 is disordered; it reads VHGSQANSPSTPSSAGGYPSPCYQSDRRIQ.

This sequence belongs to the TALE/PBX homeobox family. In terms of assembly, forms a heterodimer with meis1; the interaction is necessary for neural fate induction.

The protein localises to the nucleus. Its function is as follows. Acts as a transcriptional activator in complex with isoform 2 of meis1, to induce posterior neural and neural crest gene expression, and thereby specify hindbrain and neural crest cell fate. Binds to a highly conserved region in the promoter of the neural crest gene zic3. Required for the nuclear transport or retention of meis1. This Xenopus tropicalis (Western clawed frog) protein is Pre-B-cell leukemia transcription factor 1.